Here is a 243-residue protein sequence, read N- to C-terminus: Pyridoxine 5'-phosphate synthase (243 aa).

Asn9 is a binding site for 3-amino-2-oxopropyl phosphate. 11 to 12 contributes to the 1-deoxy-D-xylulose 5-phosphate binding site; it reads DH. Arg20 lines the 3-amino-2-oxopropyl phosphate pocket. His45 (proton acceptor) is an active-site residue. The 1-deoxy-D-xylulose 5-phosphate site is built by Arg47 and His52. Residue Glu72 is the Proton acceptor of the active site. A 1-deoxy-D-xylulose 5-phosphate-binding site is contributed by Thr102. His193 functions as the Proton donor in the catalytic mechanism. 3-amino-2-oxopropyl phosphate is bound by residues Gly194 and 215–216; that span reads GH.

This sequence belongs to the PNP synthase family. As to quaternary structure, homooctamer; tetramer of dimers.

Its subcellular location is the cytoplasm. It catalyses the reaction 3-amino-2-oxopropyl phosphate + 1-deoxy-D-xylulose 5-phosphate = pyridoxine 5'-phosphate + phosphate + 2 H2O + H(+). The protein operates within cofactor biosynthesis; pyridoxine 5'-phosphate biosynthesis; pyridoxine 5'-phosphate from D-erythrose 4-phosphate: step 5/5. Its function is as follows. Catalyzes the complicated ring closure reaction between the two acyclic compounds 1-deoxy-D-xylulose-5-phosphate (DXP) and 3-amino-2-oxopropyl phosphate (1-amino-acetone-3-phosphate or AAP) to form pyridoxine 5'-phosphate (PNP) and inorganic phosphate. In Shigella boydii serotype 4 (strain Sb227), this protein is Pyridoxine 5'-phosphate synthase.